A 96-amino-acid polypeptide reads, in one-letter code: Non-specific lipid-transfer protein 2 (96 aa).

The signal sequence occupies residues 1–27; that stretch reads MMRRLAVLVLAVAMVAACGGGVVGVAG. Intrachain disulfides connect C30–C62, C38–C52, C53–C88, and C64–C95.

It belongs to the plant LTP family. B11E subfamily.

Functionally, transfer lipids across membranes. May play a role in plant defense or in the biosynthesis of cuticle layers. The protein is Non-specific lipid-transfer protein 2 (LTP-2) of Oryza sativa subsp. indica (Rice).